We begin with the raw amino-acid sequence, 529 residues long: Glycylpeptide N-tetradecanoyltransferase 2 (529 aa).

The tract at residues 1–82 (MAEDSESAAS…QEIKIQQSSK (82 aa)) is disordered. The segment covering 15–32 (ELDDQDTCGIDGDNEEET) has biased composition (acidic residues). Residue Ser38 is modified to Phosphoserine. A compositionally biased stretch (basic residues) spans 46-57 (KKKKKKQKRKKE). A compositionally biased stretch (polar residues) spans 61 to 82 (SGGTKSDSASDSQEIKIQQSSK). Tetradecanoyl-CoA is bound by residues Trp153, Leu281, Val283, Ser289, Arg291, Val292, and Ala293.

Belongs to the NMT family.

The protein resides in the cytoplasm. Its subcellular location is the membrane. The catalysed reaction is N-terminal glycyl-[protein] + tetradecanoyl-CoA = N-tetradecanoylglycyl-[protein] + CoA + H(+). It catalyses the reaction N-terminal glycyl-L-lysyl-[protein] + tetradecanoyl-CoA = N-terminal glycyl-(N(6)-tetradecanoyl)-L-lysyl-[protein] + CoA + H(+). Functionally, adds a myristoyl group to the N-terminal glycine residue of certain cellular and viral proteins. Also able to mediate N-terminal lysine myristoylation of proteins: catalyzes myristoylation of ARF6 on both 'Gly-2' and 'Lys-3'. Lysine myristoylation is required to maintain ARF6 on membranes during the GTPase cycle. The polypeptide is Glycylpeptide N-tetradecanoyltransferase 2 (Nmt2) (Mus musculus (Mouse)).